The following is a 302-amino-acid chain: tRNA-cytidine(32) 2-sulfurtransferase (302 aa).

A PP-loop motif motif is present at residues 45–50; that stretch reads SGGKDS. [4Fe-4S] cluster is bound by residues Cys120, Cys123, and Cys211.

This sequence belongs to the TtcA family. Homodimer. The cofactor is Mg(2+). Requires [4Fe-4S] cluster as cofactor.

It localises to the cytoplasm. The enzyme catalyses cytidine(32) in tRNA + S-sulfanyl-L-cysteinyl-[cysteine desulfurase] + AH2 + ATP = 2-thiocytidine(32) in tRNA + L-cysteinyl-[cysteine desulfurase] + A + AMP + diphosphate + H(+). It participates in tRNA modification. Catalyzes the ATP-dependent 2-thiolation of cytidine in position 32 of tRNA, to form 2-thiocytidine (s(2)C32). The sulfur atoms are provided by the cysteine/cysteine desulfurase (IscS) system. The sequence is that of tRNA-cytidine(32) 2-sulfurtransferase from Cellvibrio japonicus (strain Ueda107) (Pseudomonas fluorescens subsp. cellulosa).